Here is a 275-residue protein sequence, read N- to C-terminus: Formamidopyrimidine-DNA glycosylase (275 aa).

Catalysis depends on proline 2, which acts as the Schiff-base intermediate with DNA. Residue glutamate 3 is the Proton donor of the active site. Lysine 59 serves as the catalytic Proton donor; for beta-elimination activity. Residues histidine 93, arginine 112, and arginine 153 each contribute to the DNA site. An FPG-type zinc finger spans residues 238–272 (NVYDRVGKPCPRCQTAIERIVVAQRSTFFCPLCQV). The active-site Proton donor; for delta-elimination activity is the arginine 262.

This sequence belongs to the FPG family. As to quaternary structure, monomer. Requires Zn(2+) as cofactor.

The enzyme catalyses Hydrolysis of DNA containing ring-opened 7-methylguanine residues, releasing 2,6-diamino-4-hydroxy-5-(N-methyl)formamidopyrimidine.. It catalyses the reaction 2'-deoxyribonucleotide-(2'-deoxyribose 5'-phosphate)-2'-deoxyribonucleotide-DNA = a 3'-end 2'-deoxyribonucleotide-(2,3-dehydro-2,3-deoxyribose 5'-phosphate)-DNA + a 5'-end 5'-phospho-2'-deoxyribonucleoside-DNA + H(+). Involved in base excision repair of DNA damaged by oxidation or by mutagenic agents. Acts as a DNA glycosylase that recognizes and removes damaged bases. Has a preference for oxidized purines, such as 7,8-dihydro-8-oxoguanine (8-oxoG). Has AP (apurinic/apyrimidinic) lyase activity and introduces nicks in the DNA strand. Cleaves the DNA backbone by beta-delta elimination to generate a single-strand break at the site of the removed base with both 3'- and 5'-phosphates. The sequence is that of Formamidopyrimidine-DNA glycosylase from Chloroflexus aggregans (strain MD-66 / DSM 9485).